The primary structure comprises 332 residues: NH(3)-dependent NAD(+) synthetase (332 aa).

48-55 contributes to the ATP binding site; that stretch reads GLSGGVDS. Residue Asp54 participates in Mg(2+) binding. Arg184 contacts deamido-NAD(+). Position 204 (Thr204) interacts with ATP. Glu209 lines the Mg(2+) pocket. Residues Lys217 and Asp224 each contribute to the deamido-NAD(+) site. Residues Lys233 and Thr255 each coordinate ATP.

This sequence belongs to the NAD synthetase family. Homodimer.

The enzyme catalyses deamido-NAD(+) + NH4(+) + ATP = AMP + diphosphate + NAD(+) + H(+). It participates in cofactor biosynthesis; NAD(+) biosynthesis; NAD(+) from deamido-NAD(+) (ammonia route): step 1/1. Its function is as follows. Catalyzes the ATP-dependent amidation of deamido-NAD to form NAD. Uses ammonia as a nitrogen source. The protein is NH(3)-dependent NAD(+) synthetase of Rhizobium rhizogenes (strain K84 / ATCC BAA-868) (Agrobacterium radiobacter).